The primary structure comprises 178 residues: Large ribosomal subunit protein bL17 (178 aa).

Residues 126-139 are compositionally biased toward basic and acidic residues; sequence DRARRVAASKKAEE. A disordered region spans residues 126–178; the sequence is DRARRVAASKKAEEQAPAAEAEEQAPAAEAEAPAADAAAEAKADEAAEDKKDA. A compositionally biased stretch (low complexity) spans 140-163; it reads QAPAAEAEEQAPAAEAEAPAADAA. The span at 164–178 shows a compositional bias: basic and acidic residues; it reads AEAKADEAAEDKKDA.

The protein belongs to the bacterial ribosomal protein bL17 family. Part of the 50S ribosomal subunit. Contacts protein L32.

The polypeptide is Large ribosomal subunit protein bL17 (Nocardia farcinica (strain IFM 10152)).